The chain runs to 1021 residues: Ubiquitin-activating enzyme E1 1 (1021 aa).

Residues Arg-22, Ala-442, and Asp-468 each coordinate ATP. Asp-470 provides a ligand contact to Mg(2+). ATP contacts are provided by residues Arg-479, Lys-492, Val-518, and 542-543; that span reads DN. Asp-542 is a Mg(2+) binding site. The active-site Glycyl thioester intermediate is Cys-598.

It belongs to the ubiquitin-activating E1 family. Monomer.

It is found in the cytoplasm. The protein resides in the nucleus. The catalysed reaction is ATP + ubiquitin + [E1 ubiquitin-activating enzyme]-L-cysteine = AMP + diphosphate + S-ubiquitinyl-[E1 ubiquitin-activating enzyme]-L-cysteine.. It participates in protein modification; protein ubiquitination. Functionally, E1 ubiquitin-activating enzyme that catalyzes the first step in ubiquitin conjugation to mark cellular proteins for degradation through the ubiquitin-proteasome system. Activates ubiquitin by first adenylating its C-terminal glycine residue with ATP, and thereafter linking this residue to the side chain of a cysteine residue in E1, yielding a ubiquitin-E1 thioester and free AMP. The polypeptide is Ubiquitin-activating enzyme E1 1 (UBA1) (Candida albicans (strain WO-1) (Yeast)).